Reading from the N-terminus, the 871-residue chain is Pentatricopeptide repeat-containing protein DOT4, chloroplastic (871 aa).

A chloroplast-targeting transit peptide spans methionine 1–arginine 28. PPR repeat units lie at residues serine 60–proline 94, threonine 96–isoleucine 127, aspartate 128–glutamate 158, lysine 159–methionine 193, aspartate 194–glutamate 228, arginine 229–arginine 259, aspartate 260–isoleucine 294, aspartate 295–arginine 329, glutamate 330–arginine 360, serine 361–proline 395, aspartate 396–phenylalanine 430, aspartate 431–serine 465, tryptophan 466–proline 497, aspartate 498–serine 532, aspartate 533–lysine 563, aspartate 564–alanine 598, aspartate 599–glutamate 629, and threonine 635–proline 665. Residues isoleucine 670–lysine 745 form a type E motif region. The interval glycine 746–isoleucine 776 is type E(+) motif. Positions glutamate 777–tryptophan 871 are type DYW motif.

This sequence belongs to the PPR family. PCMP-H subfamily. Requires Zn(2+) as cofactor. As to expression, weakly expressed in leaves.

The protein localises to the plastid. Its subcellular location is the chloroplast. Functionally, plays a major role in single RNA editing events in chloroplasts. Acts as a site-recognition transacting factor involved in the edition of the unique site (corresponding to cytidine-488) of rpoC1, which is a plastid-encoded subunit of the chloroplast DNA-directed RNA polymerase. May provide the catalytic activity for editing site conversion. Involved in leaf vasculature patterning. The protein is Pentatricopeptide repeat-containing protein DOT4, chloroplastic of Arabidopsis thaliana (Mouse-ear cress).